A 200-amino-acid polypeptide reads, in one-letter code: Cytochrome c biogenesis ATP-binding export protein CcmA (200 aa).

The ABC transporter domain occupies 2-200 (LDVIELDFDY…NKADYEEYHL (199 aa)). Residue 34–41 (GSNGAGKT) coordinates ATP.

It belongs to the ABC transporter superfamily. CcmA exporter (TC 3.A.1.107) family. In terms of assembly, the complex is composed of two ATP-binding proteins (CcmA) and two transmembrane proteins (CcmB).

The protein resides in the cell inner membrane. It carries out the reaction heme b(in) + ATP + H2O = heme b(out) + ADP + phosphate + H(+). Functionally, part of the ABC transporter complex CcmAB involved in the biogenesis of c-type cytochromes; once thought to export heme, this seems not to be the case, but its exact role is uncertain. Responsible for energy coupling to the transport system. The chain is Cytochrome c biogenesis ATP-binding export protein CcmA from Legionella pneumophila (strain Lens).